The following is a 388-amino-acid chain: Putative pyridoxal phosphate-dependent aminotransferase EpsN (388 aa).

Residue Lys190 is modified to N6-(pyridoxal phosphate)lysine.

This sequence belongs to the DegT/DnrJ/EryC1 family. It depends on pyridoxal 5'-phosphate as a cofactor.

In terms of biological role, may be involved in the production of the exopolysaccharide (EPS) component of the extracellular matrix during biofilm formation. EPS is responsible for the adhesion of chains of cells into bundles. This is Putative pyridoxal phosphate-dependent aminotransferase EpsN (epsN) from Bacillus subtilis (strain 168).